A 257-amino-acid chain; its full sequence is Hydroxyacylglutathione hydrolase (257 aa).

Zn(2+) contacts are provided by histidine 54, histidine 56, aspartate 58, histidine 59, histidine 113, aspartate 137, and histidine 175.

The protein belongs to the metallo-beta-lactamase superfamily. Glyoxalase II family. In terms of assembly, monomer. The cofactor is Zn(2+).

It catalyses the reaction an S-(2-hydroxyacyl)glutathione + H2O = a 2-hydroxy carboxylate + glutathione + H(+). It participates in secondary metabolite metabolism; methylglyoxal degradation; (R)-lactate from methylglyoxal: step 2/2. In terms of biological role, thiolesterase that catalyzes the hydrolysis of S-D-lactoyl-glutathione to form glutathione and D-lactic acid. The chain is Hydroxyacylglutathione hydrolase from Crocosphaera subtropica (strain ATCC 51142 / BH68) (Cyanothece sp. (strain ATCC 51142)).